A 448-amino-acid polypeptide reads, in one-letter code: tRNA(Ile)-lysidine synthase (448 aa).

25–30 (SGGSDS) lines the ATP pocket.

It belongs to the tRNA(Ile)-lysidine synthase family.

It localises to the cytoplasm. It carries out the reaction cytidine(34) in tRNA(Ile2) + L-lysine + ATP = lysidine(34) in tRNA(Ile2) + AMP + diphosphate + H(+). In terms of biological role, ligates lysine onto the cytidine present at position 34 of the AUA codon-specific tRNA(Ile) that contains the anticodon CAU, in an ATP-dependent manner. Cytidine is converted to lysidine, thus changing the amino acid specificity of the tRNA from methionine to isoleucine. This Brucella suis biovar 1 (strain 1330) protein is tRNA(Ile)-lysidine synthase.